The sequence spans 124 residues: Large ribosomal subunit protein mL51 (124 aa).

The transit peptide at 1–31 (MSVFGGLWRSAVNLCQSSRLFSTGSCARIRM) directs the protein to the mitochondrion.

Belongs to the mitochondrion-specific ribosomal protein mL51 family. Component of the mitochondrial ribosome large subunit (39S) which comprises a 16S rRNA and about 50 distinct proteins.

It is found in the mitochondrion. This Danio rerio (Zebrafish) protein is Large ribosomal subunit protein mL51 (mrpl51).